The following is a 377-amino-acid chain: Nitric oxide reductase FlRd-NAD(+) reductase (377 aa).

This sequence belongs to the FAD-dependent oxidoreductase family. Requires FAD as cofactor.

It is found in the cytoplasm. The catalysed reaction is 2 reduced [nitric oxide reductase rubredoxin domain] + NAD(+) + H(+) = 2 oxidized [nitric oxide reductase rubredoxin domain] + NADH. The protein operates within nitrogen metabolism; nitric oxide reduction. In terms of biological role, one of at least two accessory proteins for anaerobic nitric oxide (NO) reductase. Reduces the rubredoxin moiety of NO reductase. The chain is Nitric oxide reductase FlRd-NAD(+) reductase from Salmonella dublin (strain CT_02021853).